Consider the following 169-residue polypeptide: Lutropin/choriogonadotropin subunit beta (169 aa).

The N-terminal stretch at M1 to A20 is a signal peptide. 6 cysteine pairs are disulfide-bonded: C29/C77, C43/C92, C46/C130, C54/C108, C58/C110, and C113/C120. Residue N33 is glycosylated (N-linked (GlcNAc...) asparagine). The segment at A131–S169 is disordered. The segment covering P145 to P154 has biased composition (low complexity). Positions G155–S169 are enriched in polar residues. N158 carries N-linked (GlcNAc...) asparagine glycosylation.

Belongs to the glycoprotein hormones subunit beta family. Heterodimer of a common alpha chain and a unique beta chain which confers biological specificity to thyrotropin, lutropin, follitropin and gonadotropin.

Its subcellular location is the secreted. Its function is as follows. Promotes spermatogenesis and ovulation by stimulating the testes and ovaries to synthesize steroids. This chain is Lutropin/choriogonadotropin subunit beta (LHB), found in Equus quagga burchellii (Burchell's zebra).